A 562-amino-acid chain; its full sequence is NAD-dependent malic enzyme (562 aa).

Tyrosine 101 acts as the Proton donor in catalysis. NAD(+) is bound at residue arginine 154. Lysine 172 functions as the Proton acceptor in the catalytic mechanism. The a divalent metal cation site is built by glutamate 243, aspartate 244, and aspartate 267. 2 residues coordinate NAD(+): aspartate 267 and asparagine 415.

Belongs to the malic enzymes family. Homotetramer. Mg(2+) is required as a cofactor. The cofactor is Mn(2+).

It carries out the reaction (S)-malate + NAD(+) = pyruvate + CO2 + NADH. The catalysed reaction is oxaloacetate + H(+) = pyruvate + CO2. The polypeptide is NAD-dependent malic enzyme (Shewanella sp. (strain ANA-3)).